The primary structure comprises 287 residues: IQ domain-containing protein K (287 aa).

The sequence is that of IQ domain-containing protein K (IQCK) from Homo sapiens (Human).